A 72-amino-acid chain; its full sequence is Male-specific sperm protein Mst84Dd (72 aa).

The protein belongs to the MST(3)CGP family. As to expression, testis.

The polypeptide is Male-specific sperm protein Mst84Dd (Mst84Dd) (Drosophila melanogaster (Fruit fly)).